A 207-amino-acid chain; its full sequence is MANYDVLKVDGTKAGSIELNDNVFGIEPNQHVLFEAINLQRASMRQGTHAVKNRSAVSGGGRKPWKQKGTGRARQGTIRAPQWRGGGIVFGPTPRSYSYKMPKKMRRLALRSALSAKVQENAFTVLESLTFDAPKTKEFKNMTTTLELPKKVLFVVEAEDVNVALSARNIPGVTVITTTGLNVLDIVHANQVVMTKGAVEKVEEVLG.

The tract at residues 50–76 (AVKNRSAVSGGGRKPWKQKGTGRARQG) is disordered.

This sequence belongs to the universal ribosomal protein uL4 family. As to quaternary structure, part of the 50S ribosomal subunit.

Functionally, one of the primary rRNA binding proteins, this protein initially binds near the 5'-end of the 23S rRNA. It is important during the early stages of 50S assembly. It makes multiple contacts with different domains of the 23S rRNA in the assembled 50S subunit and ribosome. Its function is as follows. Forms part of the polypeptide exit tunnel. The sequence is that of Large ribosomal subunit protein uL4 from Macrococcus caseolyticus (strain JCSC5402) (Macrococcoides caseolyticum).